We begin with the raw amino-acid sequence, 183 residues long: Senescence-associated protein DIN1 (183 aa).

Residues 83–183 (AQAGYKHLDV…WTENELPVEE (101 aa)) enclose the Rhodanese domain.

In terms of biological role, is thought to act during the early stages of leaf senescence. The protein is Senescence-associated protein DIN1 (DIN1) of Raphanus sativus (Radish).